We begin with the raw amino-acid sequence, 270 residues long: NAD(P)H-hydrate epimerase (270 aa).

Positions 25 to 234 (FQQLMDLMQN…DLLAPEAIYQ (210 aa)) constitute a YjeF N-terminal domain. 73–77 (DNGGQ) provides a ligand contact to (6S)-NADPHX. Asparagine 74 and aspartate 144 together coordinate K(+). (6S)-NADPHX contacts are provided by residues 148–154 (GVGLYGH) and glutamate 177. Threonine 180 serves as a coordination point for K(+).

This sequence belongs to the NnrE/AIBP family. K(+) serves as cofactor.

The catalysed reaction is (6R)-NADHX = (6S)-NADHX. It carries out the reaction (6R)-NADPHX = (6S)-NADPHX. Its function is as follows. Catalyzes the epimerization of the S- and R-forms of NAD(P)HX, a damaged form of NAD(P)H that is a result of enzymatic or heat-dependent hydration. This is a prerequisite for the S-specific NAD(P)H-hydrate dehydratase to allow the repair of both epimers of NAD(P)HX. The polypeptide is NAD(P)H-hydrate epimerase (Legionella pneumophila serogroup 1 (strain 2300/99 Alcoy)).